The primary structure comprises 445 residues: Membrane protein insertase YidC (445 aa).

A run of 5 helical transmembrane segments spans residues 6-26 (VVAI…PIKV), 248-268 (FGWA…PLYH), 313-333 (ASGC…WSVI), 352-372 (LSAG…VASY), and 388-408 (GIIM…GLFL).

The protein belongs to the OXA1/ALB3/YidC family. Type 1 subfamily. As to quaternary structure, interacts with the Sec translocase complex via SecD. Specifically interacts with transmembrane segments of nascent integral membrane proteins during membrane integration.

It is found in the cell inner membrane. Its function is as follows. Required for the insertion and/or proper folding and/or complex formation of integral membrane proteins into the membrane. Involved in integration of membrane proteins that insert both dependently and independently of the Sec translocase complex, as well as at least some lipoproteins. Aids folding of multispanning membrane proteins. The protein is Membrane protein insertase YidC of Thermotoga maritima (strain ATCC 43589 / DSM 3109 / JCM 10099 / NBRC 100826 / MSB8).